The primary structure comprises 212 residues: Large ribosomal subunit protein uL1 (212 aa).

It belongs to the universal ribosomal protein uL1 family. Part of the 50S ribosomal subunit.

In terms of biological role, binds directly to 23S rRNA. Probably involved in E site tRNA release. Functionally, protein L1 is also a translational repressor protein, it controls the translation of its operon by binding to its mRNA. The chain is Large ribosomal subunit protein uL1 from Halobacterium salinarum (strain ATCC 29341 / DSM 671 / R1).